The primary structure comprises 155 residues: Ribosome maturation factor RimP (155 aa).

Belongs to the RimP family.

The protein resides in the cytoplasm. Its function is as follows. Required for maturation of 30S ribosomal subunits. In Salinibacter ruber (strain DSM 13855 / M31), this protein is Ribosome maturation factor RimP.